Consider the following 320-residue polypeptide: MPTGDFDSKPSWADQVEEEGEDDKCVTSELLKGIPLATGDTSPEPELLPGAPLPPPKEVINGNIKTVTEYKIDEDGKKFKIVRTFRIETRKASKAVARRKNWKKFGNSEFDPPGPNVATTTVSDDVSMTFITSKEDLNCQEEEDPMNKLKGQKIVSCRICKGDHWTTRCPYKDTLGPMQKELAEQLGLSTGEKEKLPGELEPVQATQNKTGKYVPPSLRDGASRRGESMQPNRRADDNATIRVTNLSEDTRETDLQELFRPFGSISRIYLAKDKTTGQSKGFAFISFHRREDAARAIAGVSGFGYDHLILNVEWAKPSTN.

Residues 1 to 59 (MPTGDFDSKPSWADQVEEEGEDDKCVTSELLKGIPLATGDTSPEPELLPGAPLPPPKEV) form a disordered region. 2 positions are modified to phosphoserine: S8 and S11. A phosphothreonine mark is found at T38 and T41. Residues S42, S189, S223, and S264 each carry the phosphoserine modification. A disordered region spans residues 209 to 234 (KTGKYVPPSLRDGASRRGESMQPNRR). Basic and acidic residues predominate over residues 221–234 (GASRRGESMQPNRR). An RRM domain is found at 239-317 (ATIRVTNLSE…LILNVEWAKP (79 aa)).

In terms of assembly, component of the eukaryotic translation initiation factor 3 (eIF-3) complex, which is composed of 13 subunits: EIF3A, EIF3B, EIF3C, EIF3D, EIF3E, EIF3F, EIF3G, EIF3H, EIF3I, EIF3J, EIF3K, EIF3L and EIF3M. The eIF-3 complex appears to include 3 stable modules: module A is composed of EIF3A, EIF3B, EIF3G and EIF3I; module B is composed of EIF3F, EIF3H, and EIF3M; and module C is composed of EIF3C, EIF3D, EIF3E, EIF3K and EIF3L. EIF3C of module C binds EIF3B of module A and EIF3H of module B, thereby linking the three modules. EIF3J is a labile subunit that binds to the eIF-3 complex via EIF3B. The eIF-3 complex interacts with RPS6KB1 under conditions of nutrient depletion. Mitogenic stimulation leads to binding and activation of a complex composed of MTOR and RPTOR, leading to phosphorylation and release of RPS6KB1 and binding of EIF4B to eIF-3. Interacts (via C-terminus) with AIFM1 (via N-terminus). Interacts with DHX33; the interaction is independent of RNA. Post-translationally, phosphorylated. Phosphorylation is enhanced upon serum stimulation.

Its subcellular location is the cytoplasm. The protein localises to the nucleus. The protein resides in the perinuclear region. Its function is as follows. RNA-binding component of the eukaryotic translation initiation factor 3 (eIF-3) complex, which is required for several steps in the initiation of protein synthesis. The eIF-3 complex associates with the 40S ribosome and facilitates the recruitment of eIF-1, eIF-1A, eIF-2:GTP:methionyl-tRNAi and eIF-5 to form the 43S pre-initiation complex (43S PIC). The eIF-3 complex stimulates mRNA recruitment to the 43S PIC and scanning of the mRNA for AUG recognition. The eIF-3 complex is also required for disassembly and recycling of post-termination ribosomal complexes and subsequently prevents premature joining of the 40S and 60S ribosomal subunits prior to initiation. The eIF-3 complex specifically targets and initiates translation of a subset of mRNAs involved in cell proliferation, including cell cycling, differentiation and apoptosis, and uses different modes of RNA stem-loop binding to exert either translational activation or repression. This subunit can bind 18S rRNA. In terms of biological role, (Microbial infection) In case of FCV infection, plays a role in the ribosomal termination-reinitiation event leading to the translation of VP2. The chain is Eukaryotic translation initiation factor 3 subunit G from Homo sapiens (Human).